A 496-amino-acid polypeptide reads, in one-letter code: Glycerol kinase (496 aa).

Residue Thr12 participates in ADP binding. The ATP site is built by Thr12, Thr13, and Ser14. Thr12 lines the sn-glycerol 3-phosphate pocket. Arg16 contacts ADP. 4 residues coordinate sn-glycerol 3-phosphate: Arg82, Glu83, Tyr134, and Asp244. Glycerol is bound by residues Arg82, Glu83, Tyr134, Asp244, and Gln245. Positions 266 and 309 each coordinate ADP. 4 residues coordinate ATP: Thr266, Gly309, Gln313, and Gly410. Residues Gly410 and Asn414 each coordinate ADP.

The protein belongs to the FGGY kinase family.

The enzyme catalyses glycerol + ATP = sn-glycerol 3-phosphate + ADP + H(+). It functions in the pathway polyol metabolism; glycerol degradation via glycerol kinase pathway; sn-glycerol 3-phosphate from glycerol: step 1/1. Its activity is regulated as follows. Inhibited by fructose 1,6-bisphosphate (FBP). In terms of biological role, key enzyme in the regulation of glycerol uptake and metabolism. Catalyzes the phosphorylation of glycerol to yield sn-glycerol 3-phosphate. The protein is Glycerol kinase of Treponema denticola (strain ATCC 35405 / DSM 14222 / CIP 103919 / JCM 8153 / KCTC 15104).